The chain runs to 261 residues: 5'-nucleotidase SurE (261 aa).

Residues aspartate 17, aspartate 18, serine 48, and asparagine 104 each contribute to the a divalent metal cation site.

The protein belongs to the SurE nucleotidase family. The cofactor is a divalent metal cation.

The protein resides in the cytoplasm. The enzyme catalyses a ribonucleoside 5'-phosphate + H2O = a ribonucleoside + phosphate. Functionally, nucleotidase that shows phosphatase activity on nucleoside 5'-monophosphates. This is 5'-nucleotidase SurE from Deinococcus geothermalis (strain DSM 11300 / CIP 105573 / AG-3a).